A 541-amino-acid polypeptide reads, in one-letter code: MQATIEKLKATASSTAATDLRAAFAADDQRFSRFSVKFDDLLMDYSKCAVNEEIVTLLEQLAREGGVEAKREEMFSGKAINFTEDRAVLHTALRNRSNTPVLVDDKDVMPDVNGVLAAMGKFADAIRSGSLKGATGKKITDVVNIGIGGSDLGPVMATLALAPFHDGPRAHFVSNIDGAHIADTLKLLDPETSLFIIASKTFTTIETMTNAATARRFIAEKLGEGAVKHHFAAVSTALDKVAAFGIESDRIFGFWDWVGGRYSIWSAIGLPLMIAIGPDNFGKFLDGAHAMDRHFREAPIRENLPMLLGLIGFYNRNVLDYPTRAILPYDQRLSRFPAYLQQLDMESNGKGVTIDGTPVEGQSGPVVWGEPGTNGQHAFYQLIHQGTSVIPAEFMIAANGFEPELRHQHQLLIANCLAQSEALMKGRTLAEAKAQLTSKGMEDSQADFIAPHRVFTGNRPSITFVYDKLTPFALGRLIALYEHRVFVEGVLFRINSFDQWGVELGKELATGLLPVVEGKESAAGHDSSTQGLVKALAGLAG.

The active-site Proton donor is the Glu-346. Residues His-377 and Lys-506 contribute to the active site.

It belongs to the GPI family.

Its subcellular location is the cytoplasm. It carries out the reaction alpha-D-glucose 6-phosphate = beta-D-fructose 6-phosphate. It functions in the pathway carbohydrate biosynthesis; gluconeogenesis. The protein operates within carbohydrate degradation; glycolysis; D-glyceraldehyde 3-phosphate and glycerone phosphate from D-glucose: step 2/4. In terms of biological role, catalyzes the reversible isomerization of glucose-6-phosphate to fructose-6-phosphate. This is Glucose-6-phosphate isomerase from Agrobacterium fabrum (strain C58 / ATCC 33970) (Agrobacterium tumefaciens (strain C58)).